Reading from the N-terminus, the 432-residue chain is Heme-based aerotactic transducer HemAT (432 aa).

The Methyl-accepting transducer domain maps to 184–420 (YNQTRDEQEE…EVSRAVSHVA (237 aa)).

Belongs to the methyl-accepting chemotaxis (MCP) protein family. As to quaternary structure, homotetramer.

Its function is as follows. Heme-containing signal transducer responsible for aerotaxis, the migratory response toward or away from oxygen. This chain is Heme-based aerotactic transducer HemAT (hemAT), found in Bacillus subtilis (strain 168).